Consider the following 318-residue polypeptide: Ornithine carbamoyltransferase (318 aa).

Residues 63 to 66, Gln90, Arg114, and 141 to 144 each bind carbamoyl phosphate; these read STRT and HPCQ. Residues Asn172, Asp235, and 239 to 240 each bind L-ornithine; that span reads SM. Carbamoyl phosphate-binding positions include 275-276 and Arg303; that span reads CL.

The protein belongs to the aspartate/ornithine carbamoyltransferase superfamily. OTCase family.

The protein resides in the cytoplasm. The catalysed reaction is carbamoyl phosphate + L-ornithine = L-citrulline + phosphate + H(+). Its pathway is amino-acid biosynthesis; L-arginine biosynthesis; L-arginine from L-ornithine and carbamoyl phosphate: step 1/3. Its function is as follows. Reversibly catalyzes the transfer of the carbamoyl group from carbamoyl phosphate (CP) to the N(epsilon) atom of ornithine (ORN) to produce L-citrulline. This chain is Ornithine carbamoyltransferase, found in Prochlorococcus marinus (strain MIT 9313).